The sequence spans 223 residues: Deoxyribose-phosphate aldolase (223 aa).

The Proton donor/acceptor role is filled by Asp91. Lys153 (schiff-base intermediate with acetaldehyde) is an active-site residue. Lys182 acts as the Proton donor/acceptor in catalysis.

This sequence belongs to the DeoC/FbaB aldolase family. DeoC type 1 subfamily.

The protein resides in the cytoplasm. It carries out the reaction 2-deoxy-D-ribose 5-phosphate = D-glyceraldehyde 3-phosphate + acetaldehyde. The protein operates within carbohydrate degradation; 2-deoxy-D-ribose 1-phosphate degradation; D-glyceraldehyde 3-phosphate and acetaldehyde from 2-deoxy-alpha-D-ribose 1-phosphate: step 2/2. Catalyzes a reversible aldol reaction between acetaldehyde and D-glyceraldehyde 3-phosphate to generate 2-deoxy-D-ribose 5-phosphate. This Streptococcus agalactiae serotype V (strain ATCC BAA-611 / 2603 V/R) protein is Deoxyribose-phosphate aldolase.